Here is a 584-residue protein sequence, read N- to C-terminus: Proteasome-associated ATPase (584 aa).

A coiled-coil region spans residues 8 to 90 (RHAERDRDEL…KEEVDRLSQP (83 aa)). 272 to 277 (GCGKTL) serves as a coordination point for ATP. Residues 583–584 (YL) are docks into pockets in the proteasome alpha-ring.

This sequence belongs to the AAA ATPase family. In terms of assembly, homohexamer. Assembles into a hexameric ring structure that caps the 20S proteasome core. Strongly interacts with the prokaryotic ubiquitin-like protein Pup through a hydrophobic interface; the interacting region of ARC lies in its N-terminal coiled-coil domain. There is one Pup binding site per ARC hexamer ring. Upon ATP-binding, the C-terminus of ARC interacts with the alpha-rings of the proteasome core, possibly by binding to the intersubunit pockets.

It functions in the pathway protein degradation; proteasomal Pup-dependent pathway. In terms of biological role, ATPase which is responsible for recognizing, binding, unfolding and translocation of pupylated proteins into the bacterial 20S proteasome core particle. May be essential for opening the gate of the 20S proteasome via an interaction with its C-terminus, thereby allowing substrate entry and access to the site of proteolysis. Thus, the C-termini of the proteasomal ATPase may function like a 'key in a lock' to induce gate opening and therefore regulate proteolysis. This is Proteasome-associated ATPase from Thermobifida fusca (strain YX).